Consider the following 487-residue polypeptide: WRKY transcription factor 1 (487 aa).

The tract at residues 69-104 (QSEVDVASPVSEKAPKVSESSGALSLQSGSEGNSPF) is disordered. Phosphoserine is present on S76. The segment covering 86–101 (SESSGALSLQSGSEGN) has biased composition (polar residues). Positions 105–169 (IREKVMEDGY…YFGEHDHPKP (65 aa)) form a DNA-binding region, WRKY 1. Zn(2+) is bound by residues C136, C141, H164, and H166. Positions 255–287 (SSRITGDNTHKDYNSPTAKRRKKGGNIELSPVE) are disordered. Residues 273–277 (KRRKK) carry the Nuclear localization signal motif. Positions 301–366 (TLFDIVNDGY…YEGKHDHDMP (66 aa)) form a DNA-binding region, WRKY 2. C332, C337, H361, and H363 together coordinate Zn(2+). Residues 380–487 (EVDDKEGDAN…QKPKTEPAQS (108 aa)) are disordered. The span at 390–401 (KTPQSSTLQSIT) shows a compositional bias: polar residues. Composition is skewed to basic and acidic residues over residues 429–462 (LDEK…DDKT) and 476–487 (EEQKPKTEPAQS).

This sequence belongs to the WRKY group I family. As to expression, expressed to similar levels in root and flower, to a somewhat lower level in stem and to low levels in leaf and siliques.

The protein localises to the nucleus. In terms of biological role, transcription factor. Binds to a 5'-CGTTGACCGAG-3' consensus core sequence which contains a W box, a frequently occurring elicitor-responsive cis-acting element. This is WRKY transcription factor 1 from Arabidopsis thaliana (Mouse-ear cress).